A 238-amino-acid polypeptide reads, in one-letter code: SPEG neighbor protein (238 aa).

The IQ domain occupies Q29–R55. 2 consecutive Ig-like domains span residues P54–L143 and P147–D236.

The chain is SPEG neighbor protein from Homo sapiens (Human).